The chain runs to 599 residues: Elongation factor 4 (599 aa).

One can recognise a tr-type G domain in the interval 2–184 (KHIRNFSIIA…RLVRDIPPPQ (183 aa)). GTP contacts are provided by residues 14 to 19 (DHGKST) and 131 to 134 (NKID).

The protein belongs to the TRAFAC class translation factor GTPase superfamily. Classic translation factor GTPase family. LepA subfamily.

It is found in the cell inner membrane. It catalyses the reaction GTP + H2O = GDP + phosphate + H(+). Required for accurate and efficient protein synthesis under certain stress conditions. May act as a fidelity factor of the translation reaction, by catalyzing a one-codon backward translocation of tRNAs on improperly translocated ribosomes. Back-translocation proceeds from a post-translocation (POST) complex to a pre-translocation (PRE) complex, thus giving elongation factor G a second chance to translocate the tRNAs correctly. Binds to ribosomes in a GTP-dependent manner. In Yersinia enterocolitica serotype O:8 / biotype 1B (strain NCTC 13174 / 8081), this protein is Elongation factor 4.